The primary structure comprises 859 residues: Protein translocase subunit SecA (859 aa).

ATP-binding positions include Gln88, Gly106–Thr110, and Asp496. Positions Phe818–Ser838 are disordered. Zn(2+)-binding residues include Cys834, Cys836, Cys845, and Cys846.

The protein belongs to the SecA family. In terms of assembly, monomer and homodimer. Part of the essential Sec protein translocation apparatus which comprises SecA, SecYEG and auxiliary proteins SecDF-YajC and YidC. Zn(2+) serves as cofactor.

The protein localises to the cell inner membrane. It localises to the cytoplasm. It carries out the reaction ATP + H2O + cellular proteinSide 1 = ADP + phosphate + cellular proteinSide 2.. Part of the Sec protein translocase complex. Interacts with the SecYEG preprotein conducting channel. Has a central role in coupling the hydrolysis of ATP to the transfer of proteins into and across the cell membrane, serving as an ATP-driven molecular motor driving the stepwise translocation of polypeptide chains across the membrane. The polypeptide is Protein translocase subunit SecA (Wolinella succinogenes (strain ATCC 29543 / DSM 1740 / CCUG 13145 / JCM 31913 / LMG 7466 / NCTC 11488 / FDC 602W) (Vibrio succinogenes)).